A 40-amino-acid chain; its full sequence is Photosystem II reaction center protein J (40 aa).

Residues 8–28 (IPLWLIGTVAGIPVIGSVGVF) traverse the membrane as a helical segment.

The protein belongs to the PsbJ family. In terms of assembly, PSII is composed of 1 copy each of membrane proteins PsbA, PsbB, PsbC, PsbD, PsbE, PsbF, PsbH, PsbI, PsbJ, PsbK, PsbL, PsbM, PsbT, PsbX, PsbY, PsbZ, Psb30/Ycf12, at least 3 peripheral proteins of the oxygen-evolving complex and a large number of cofactors. It forms dimeric complexes.

It is found in the plastid. Its subcellular location is the chloroplast thylakoid membrane. One of the components of the core complex of photosystem II (PSII). PSII is a light-driven water:plastoquinone oxidoreductase that uses light energy to abstract electrons from H(2)O, generating O(2) and a proton gradient subsequently used for ATP formation. It consists of a core antenna complex that captures photons, and an electron transfer chain that converts photonic excitation into a charge separation. In Acorus calamus (Sweet flag), this protein is Photosystem II reaction center protein J.